A 412-amino-acid polypeptide reads, in one-letter code: Poly-beta-1,6-N-acetyl-D-glucosamine synthase (412 aa).

A run of 4 helical transmembrane segments spans residues 6 to 28 (FLLF…FYFT), 290 to 312 (LYIL…LYLG), 332 to 354 (IFLL…ALFI), and 366 to 388 (LIFV…LVAF).

It belongs to the glycosyltransferase 2 family.

It localises to the cell membrane. Its function is as follows. N-acetylglucosaminyltransferase that catalyzes the polymerization of single monomer units of UDP-N-acetylglucosamine to produce the linear homomer poly-beta-1,6-N-acetyl-D-glucosamine (PNAG, also referred to as PIA), a biofilm adhesin polysaccharide. Requires IcaD for full activity. This Staphylococcus aureus (strain MSSA476) protein is Poly-beta-1,6-N-acetyl-D-glucosamine synthase (icaA).